The sequence spans 475 residues: Aspartyl/glutamyl-tRNA(Asn/Gln) amidotransferase subunit B (475 aa).

This sequence belongs to the GatB/GatE family. GatB subfamily. As to quaternary structure, heterotrimer of A, B and C subunits.

The catalysed reaction is L-glutamyl-tRNA(Gln) + L-glutamine + ATP + H2O = L-glutaminyl-tRNA(Gln) + L-glutamate + ADP + phosphate + H(+). It carries out the reaction L-aspartyl-tRNA(Asn) + L-glutamine + ATP + H2O = L-asparaginyl-tRNA(Asn) + L-glutamate + ADP + phosphate + 2 H(+). In terms of biological role, allows the formation of correctly charged Asn-tRNA(Asn) or Gln-tRNA(Gln) through the transamidation of misacylated Asp-tRNA(Asn) or Glu-tRNA(Gln) in organisms which lack either or both of asparaginyl-tRNA or glutaminyl-tRNA synthetases. The reaction takes place in the presence of glutamine and ATP through an activated phospho-Asp-tRNA(Asn) or phospho-Glu-tRNA(Gln). In Thermoanaerobacter pseudethanolicus (strain ATCC 33223 / 39E) (Clostridium thermohydrosulfuricum), this protein is Aspartyl/glutamyl-tRNA(Asn/Gln) amidotransferase subunit B.